Reading from the N-terminus, the 516-residue chain is Golgi-associated kinase 1B (516 aa).

Topologically, residues 1–37 (MTCPDKLGQLINWFVCSLCAPRVCKLWSSRRPRTRRN) are cytoplasmic. A helical; Signal-anchor for type II membrane protein membrane pass occupies residues 38–55 (LLLGTACAIYLGFLVSQV). The Extracellular segment spans residues 56 to 516 (GKGSFQHGQA…HGARVLPMNE (461 aa)). A glycan (N-linked (GlcNAc...) asparagine) is linked at Asn286.

This sequence belongs to the GASK family.

Its subcellular location is the golgi apparatus membrane. The protein is Golgi-associated kinase 1B of Rattus norvegicus (Rat).